Reading from the N-terminus, the 147-residue chain is Hemoglobin subunit epsilon-4 (147 aa).

Residues 3-147 (HFTTEEKAAV…VANALAHKYH (145 aa)) enclose the Globin domain. The heme b site is built by H64 and H93.

This sequence belongs to the globin family. As to expression, red blood cells.

Functionally, hemoglobin epsilon chain is a beta-type chain found in early embryos. This chain is Hemoglobin subunit epsilon-4 (HBE4), found in Bos taurus (Bovine).